Reading from the N-terminus, the 618-residue chain is DNA ligase 2 (618 aa).

The segment covering 197–208 (DKKTLESREDAK) has biased composition (basic and acidic residues). Residues 197-250 (DKKTLESREDAKSVPPASQPEITNKISGDTSPNTSESVQTKKSDPDTSSNVDPS) are disordered. The span at 216 to 234 (PEITNKISGDTSPNTSESV) shows a compositional bias: polar residues. Position 312 (glutamate 312) interacts with ATP. Catalysis depends on lysine 314, which acts as the N6-AMP-lysine intermediate. Residues arginine 319, arginine 334, glutamate 363, phenylalanine 403, arginine 476, and lysine 482 each contribute to the ATP site. The disordered stretch occupies residues 459 to 480 (HEGVMLKDPDSTYNPGSRGQHW).

The protein belongs to the ATP-dependent DNA ligase family. Requires Mg(2+) as cofactor.

The enzyme catalyses ATP + (deoxyribonucleotide)n-3'-hydroxyl + 5'-phospho-(deoxyribonucleotide)m = (deoxyribonucleotide)n+m + AMP + diphosphate.. DNA ligase that seals nicks in double-stranded DNA during DNA replication, DNA recombination and DNA repair. The polypeptide is DNA ligase 2 (Haloquadratum walsbyi (strain DSM 16790 / HBSQ001)).